Consider the following 210-residue polypeptide: Frataxin, mitochondrial (210 aa).

Residues 1 to 41 (MWTFGRRAVAGLLASPSPAQAQTLARAPRLAELAQLCSRRG) constitute a mitochondrion transit peptide.

It belongs to the frataxin family. As to quaternary structure, component of the mitochondrial core iron-sulfur cluster (ISC) complex composed of NFS1, LYRM4, NDUFAB1, ISCU, FXN, and FDX2; this complex is a heterohexamer containing two copies of each monomer. Homodimer. Monomer (probable predominant form). Oligomer. Monomers and polymeric aggregates of &gt;1 MDa have been isolated from mitochondria. A small fraction of heterologous overexpressed recombinant frataxin forms high-molecular weight aggregates that incorporate iron. Interacts with LYRM4. Interacts (via ferrous form) with ISCU; the interaction is possible when both are bound to the dimeric form of the cysteine desulfurase complex (NFS1:LYRM4) and the interaction enhances FXN interaction to the dimeric form of the cysteine desulfurase complex (NFS1:LYRM4). Interacts with FECH; one iron-bound FXN monomer seems to interact with a FECH homodimer. Interacts with SDHA and SDHB. Interacts with ACO2; the interaction is dependent on citrate. Interacts with HSPA9. In terms of assembly, interacts with ACO1. Interacts with ISCU (cytoplasmic form). In terms of processing, processed in two steps by mitochondrial processing peptidase (MPP). MPP first cleaves the precursor to intermediate form and subsequently converts the intermediate to yield frataxin mature form (frataxin(81-210)) which is the predominant form. The additional forms, frataxin(56-210) and frataxin(78-210), seem to be produced when the normal maturation process is impaired; their physiological relevance is unsure.

It is found in the mitochondrion. The protein resides in the cytoplasm. Its subcellular location is the cytosol. The catalysed reaction is 4 Fe(2+) + O2 + 4 H(+) = 4 Fe(3+) + 2 H2O. Functions as an activator of persulfide transfer to the scaffoding protein ISCU as component of the core iron-sulfur cluster (ISC) assembly complex and participates to the [2Fe-2S] cluster assembly. Accelerates sulfur transfer from NFS1 persulfide intermediate to ISCU and to small thiols such as L-cysteine and glutathione leading to persulfuration of these thiols and ultimately sulfide release. Binds ferrous ion and is released from FXN upon the addition of both L-cysteine and reduced FDX2 during [2Fe-2S] cluster assembly. The core iron-sulfur cluster (ISC) assembly complex is involved in the de novo synthesis of a [2Fe-2S] cluster, the first step of the mitochondrial iron-sulfur protein biogenesis. This process is initiated by the cysteine desulfurase complex (NFS1:LYRM4:NDUFAB1) that produces persulfide which is delivered on the scaffold protein ISCU in a FXN-dependent manner. Then this complex is stabilized by FDX2 which provides reducing equivalents to accomplish the [2Fe-2S] cluster assembly. Finally, the [2Fe-2S] cluster is transferred from ISCU to chaperone proteins, including HSCB, HSPA9 and GLRX5. May play a role in the protection against iron-catalyzed oxidative stress through its ability to catalyze the oxidation of Fe(2+) to Fe(3+); the oligomeric form but not the monomeric form has in vitro ferroxidase activity. May be able to store large amounts of iron in the form of a ferrihydrite mineral by oligomerization; however, the physiological relevance is unsure as reports are conflicting and the function has only been shown using heterologous overexpression systems. May function as an iron chaperone protein that protects the aconitase [4Fe-4S]2+ cluster from disassembly and promotes enzyme reactivation. May play a role as a high affinity iron binding partner for FECH that is capable of both delivering iron to ferrochelatase and mediating the terminal step in mitochondrial heme biosynthesis. In terms of biological role, modulates the RNA-binding activity of ACO1. May be involved in the cytoplasmic iron-sulfur protein biogenesis. May contribute to oxidative stress resistance and overall cell survival. This Macaca fascicularis (Crab-eating macaque) protein is Frataxin, mitochondrial.